A 522-amino-acid polypeptide reads, in one-letter code: Target of rapamycin complex 2 subunit MAPKAP1 (522 aa).

N-acetylalanine is present on alanine 2. Positions 2-184 (AFLDNPTIIL…KKIDVYLPLH (183 aa)) are interaction with MAP3K2. Positions 2-267 (AFLDNPTIIL…GFSTLALVEK (266 aa)) are interaction with NBN. Position 86 is a phosphothreonine (threonine 86). 4 positions are modified to phosphoserine: serine 128, serine 186, serine 315, and serine 356. Residues 139–267 (QSILSVRLEQ…GFSTLALVEK (129 aa)) form the CRIM domain. The SIN1-type RBD stretch occupies residues 279 to 353 (LFVRINAAHG…QSAWEFCLVR (75 aa)). An SIN1-type PH domain is found at 382–487 (HYKSFKVSMI…IVLKVNYILE (106 aa)). Arginine 393 contributes to the a 1,2-diacyl-sn-glycero-3-phospho-(1D-myo-inositol-3,4,5-trisphosphate) binding site. Position 398 is a phosphothreonine (threonine 398). A 1,2-diacyl-sn-glycero-3-phospho-(1D-myo-inositol-3,4,5-trisphosphate)-binding residues include lysine 428 and lysine 464. The interval 468-522 (FESDAATVNEIVLKVNYILESRASTARADYFAQKQRKLNRRTSFSFQKEKKSGQQ) is interaction with ATF2. Serine 510 carries the post-translational modification Phosphoserine.

The protein belongs to the SIN1 family. In terms of assembly, component of the mechanistic target of rapamycin complex 2 (mTORC2), consisting in two heterotretramers composed of MTOR, MLST8, RICTOR and MAPKAP1/SIN1. The mTORC2 core complex associates with PRR5/PROTOR1 and/or PRR5L/PROTOR2. Contrary to mTORC1, mTORC2 does not bind to and is not sensitive to FKBP12-rapamycin. Interacts with MAP3K2. Interacts with ATF2. Interacts with MAPK8. Interacts with GTP-bound HRAS and KRAS; inhibiting their activity. Interacts with IFNAR2. As to quaternary structure, interacts with CCDC28B. Interacts with NBN. Post-translationally, phosphorylation at Ser-128 by PKC promotes relocalization to the perinuclear region, where the mTORC2 complex specifically mediates phosphorylation of SGK1. Phosphorylated at Thr-86 by AKT1 or RPS6KB1 in the presence of growth factors; the effect of this phosphorylation is however unclear. According to two studies, phosphorylation at Thr-86 by AKT1 is part of a positive feedback loop that increases mTORC2 activation. According to another study, phosphorylation at Thr-86 and Thr-398 by RPS6KB1 promotes dissociation from the mTORC2 complex, leading to inhibit mTORC2 signaling. Ubiquitously expressed, with highest levels in heart and skeletal muscle.

It is found in the cell membrane. The protein resides in the endoplasmic reticulum membrane. The protein localises to the early endosome membrane. Its subcellular location is the late endosome membrane. It localises to the lysosome membrane. It is found in the golgi apparatus membrane. The protein resides in the mitochondrion outer membrane. The protein localises to the cytoplasm. Its subcellular location is the perinuclear region. It localises to the nucleus. It is found in the cytosol. Its activity is regulated as follows. Phosphatidylinositol 3,4,5-trisphosphate (PI(3,4,5)P3) promotes MTOR activation by relieving MAPKAP1/SIN1-mediated inhibition of MTOR that takes place in absence of PI(3,4,5)P3. Component of the mechanistic target of rapamycin complex 2 (mTORC2), which transduces signals from growth factors to pathways involved in proliferation, cytoskeletal organization, lipogenesis and anabolic output. In response to growth factors, mTORC2 phosphorylates and activates AGC protein kinase family members, including AKT (AKT1, AKT2 and AKT3), PKC (PRKCA, PRKCB and PRKCE) and SGK1. In contrast to mTORC1, mTORC2 is nutrient-insensitive. Within the mTORC2 complex, MAPKAP1/SIN1 acts as a substrate adapter which recognizes and binds AGC protein kinase family members for phosphorylation by MTOR. mTORC2 plays a critical role in AKT1 activation by mediating phosphorylation of different sites depending on the context, such as 'Thr-450', 'Ser-473', 'Ser-477' or 'Thr-479', facilitating the phosphorylation of the activation loop of AKT1 on 'Thr-308' by PDPK1/PDK1 which is a prerequisite for full activation. mTORC2 catalyzes the phosphorylation of SGK1 at 'Ser-422' and of PRKCA on 'Ser-657'. The mTORC2 complex also phosphorylates various proteins involved in insulin signaling, such as FBXW8 and IGF2BP1. mTORC2 acts upstream of Rho GTPases to regulate the actin cytoskeleton, probably by activating one or more Rho-type guanine nucleotide exchange factors. mTORC2 promotes the serum-induced formation of stress-fibers or F-actin. MAPKAP1 inhibits MAP3K2 by preventing its dimerization and autophosphorylation. Inhibits HRAS and KRAS independently of mTORC2 complex. Enhances osmotic stress-induced phosphorylation of ATF2 and ATF2-mediated transcription. Involved in ciliogenesis, regulates cilia length through its interaction with CCDC28B independently of mTORC2 complex. Its function is as follows. In contrast to isoform 1, isoform 2 and isoform 6, isoform 4 is not a component of the a mTORC2 complex. In Homo sapiens (Human), this protein is Target of rapamycin complex 2 subunit MAPKAP1.